A 468-amino-acid chain; its full sequence is ATP synthase subunit beta (468 aa).

An ATP-binding site is contributed by 148–155; sequence GGAGVGKT.

It belongs to the ATPase alpha/beta chains family. F-type ATPases have 2 components, CF(1) - the catalytic core - and CF(0) - the membrane proton channel. CF(1) has five subunits: alpha(3), beta(3), gamma(1), delta(1), epsilon(1). CF(0) has three main subunits: a(1), b(2) and c(9-12). The alpha and beta chains form an alternating ring which encloses part of the gamma chain. CF(1) is attached to CF(0) by a central stalk formed by the gamma and epsilon chains, while a peripheral stalk is formed by the delta and b chains.

It is found in the cell membrane. The catalysed reaction is ATP + H2O + 4 H(+)(in) = ADP + phosphate + 5 H(+)(out). In terms of biological role, produces ATP from ADP in the presence of a proton gradient across the membrane. The catalytic sites are hosted primarily by the beta subunits. This chain is ATP synthase subunit beta, found in Stenotrophomonas maltophilia (strain K279a).